The following is a 270-amino-acid chain: F-actin-capping protein subunit beta (270 aa).

This sequence belongs to the F-actin-capping protein beta subunit family. As to quaternary structure, component of the F-actin capping complex, composed of a heterodimer of an alpha and a beta subunit.

It localises to the cytoplasm. The protein localises to the cytoskeleton. Functionally, F-actin-capping proteins bind in a Ca(2+)-independent manner to the fast growing ends of actin filaments (barbed end) thereby blocking the exchange of subunits at these ends. Unlike other capping proteins (such as gelsolin and severin), these proteins do not sever actin filaments. This chain is F-actin-capping protein subunit beta (cap-2), found in Caenorhabditis elegans.